The following is a 521-amino-acid chain: MSEAASESRTNATEYTVSEISGALKRTVEDVFGNVRVRGEISGYRGPHSSGHAYFALKDDRARLDAVVWKGTMSRLKFRPEEGMEVIATGKLTTYPGKSNYQIVIDNLEPAGAGALMALLEERKRRLQAEGLFDAGRKRRLPFMPRTIGVVTSPTGSVIRDIIHRIKDRFPLHVLVWPVRVQGDTASAEVTNAVTGFNALAWDGSIQRPDLLIVARGGGSLEDLWGFNDEALARAVAASGIPVISAVGHETDWTLIDLVADVRAPTPTGAAEIAVPVKADLEATLASLGARLKAAVLRNFERKRQAARAAARALPSPDQLLALPRRRLDEATSRLGRGLSVSVDRKRARLQGQRLTPATLSRRINEARTLTGRDLARAQAAFFAIVRERRARFARTATRLSPAPIARRQKLQADTLAALARRQDRVISLRLERLRGQLSQAERLLTTLSHKAVLARGFALVKNADGAVIKQAADVVSGMALTLEFADGTADAVATSGAARPKPAAKPSTKAKEPGNQGSLF.

Residues 494-521 are disordered; sequence ATSGAARPKPAAKPSTKAKEPGNQGSLF. The span at 498-508 shows a compositional bias: low complexity; the sequence is AARPKPAAKPS.

This sequence belongs to the XseA family. As to quaternary structure, heterooligomer composed of large and small subunits.

It localises to the cytoplasm. The catalysed reaction is Exonucleolytic cleavage in either 5'- to 3'- or 3'- to 5'-direction to yield nucleoside 5'-phosphates.. Its function is as follows. Bidirectionally degrades single-stranded DNA into large acid-insoluble oligonucleotides, which are then degraded further into small acid-soluble oligonucleotides. This Mesorhizobium japonicum (strain LMG 29417 / CECT 9101 / MAFF 303099) (Mesorhizobium loti (strain MAFF 303099)) protein is Exodeoxyribonuclease 7 large subunit.